Consider the following 186-residue polypeptide: FMN-dependent NADH:quinone oxidoreductase 1 (186 aa).

FMN is bound by residues 15 to 17 (SVS) and 81 to 84 (MYNF).

Belongs to the azoreductase type 1 family. Homodimer. Requires FMN as cofactor.

It carries out the reaction 2 a quinone + NADH + H(+) = 2 a 1,4-benzosemiquinone + NAD(+). The enzyme catalyses N,N-dimethyl-1,4-phenylenediamine + anthranilate + 2 NAD(+) = 2-(4-dimethylaminophenyl)diazenylbenzoate + 2 NADH + 2 H(+). Its function is as follows. Quinone reductase that provides resistance to thiol-specific stress caused by electrophilic quinones. In terms of biological role, also exhibits azoreductase activity. Catalyzes the reductive cleavage of the azo bond in aromatic azo compounds to the corresponding amines. The chain is FMN-dependent NADH:quinone oxidoreductase 1 from Idiomarina loihiensis (strain ATCC BAA-735 / DSM 15497 / L2-TR).